Reading from the N-terminus, the 893-residue chain is Eukaryotic translation initiation factor 3 subunit A (893 aa).

In terms of domain architecture, PCI spans 319 to 502 (LQRMAAHVLL…NSIFFGTDLT (184 aa)). Coiled coils occupy residues 576–707 (QKII…RAKR) and 784–881 (EIAL…REVA). Disordered stretches follow at residues 592–634 (AREL…EIQA) and 837–893 (AEAR…RRRQ). A compositionally biased stretch (basic and acidic residues) spans 837 to 881 (AEARRLEREAEDEKRRQQYEKQRAKEEEAERKIQEDRDRLAREVA).

Belongs to the eIF-3 subunit A family. Component of the eukaryotic translation initiation factor 3 (eIF-3) complex. The eIF-3 complex interacts with pix.

It is found in the cytoplasm. In terms of biological role, RNA-binding component of the eukaryotic translation initiation factor 3 (eIF-3) complex, which is involved in protein synthesis of a specialized repertoire of mRNAs and, together with other initiation factors, stimulates binding of mRNA and methionyl-tRNAi to the 40S ribosome. The eIF-3 complex specifically targets and initiates translation of a subset of mRNAs involved in cell proliferation. This is Eukaryotic translation initiation factor 3 subunit A from Drosophila grimshawi (Hawaiian fruit fly).